A 313-amino-acid chain; its full sequence is Porphobilinogen deaminase (313 aa).

Position 242 is an S-(dipyrrolylmethanemethyl)cysteine (Cys-242).

This sequence belongs to the HMBS family. As to quaternary structure, monomer. Dipyrromethane serves as cofactor.

It catalyses the reaction 4 porphobilinogen + H2O = hydroxymethylbilane + 4 NH4(+). It participates in porphyrin-containing compound metabolism; protoporphyrin-IX biosynthesis; coproporphyrinogen-III from 5-aminolevulinate: step 2/4. Tetrapolymerization of the monopyrrole PBG into the hydroxymethylbilane pre-uroporphyrinogen in several discrete steps. This is Porphobilinogen deaminase from Escherichia coli O7:K1 (strain IAI39 / ExPEC).